A 232-amino-acid chain; its full sequence is Ribonuclease 3 (232 aa).

Residues 5–134 (NDAISKIIDY…LIGAIYIDGG (130 aa)) form the RNase III domain. Residue glutamate 47 participates in Mg(2+) binding. Residue aspartate 51 is part of the active site. Positions 120 and 123 each coordinate Mg(2+). Glutamate 123 is an active-site residue. The DRBM domain maps to 159 to 228 (DPKTSLQEWT…AELMLEKIGK (70 aa)).

Belongs to the ribonuclease III family. In terms of assembly, homodimer. The cofactor is Mg(2+).

The protein localises to the cytoplasm. The catalysed reaction is Endonucleolytic cleavage to 5'-phosphomonoester.. Functionally, digests double-stranded RNA. Involved in the processing of primary rRNA transcript to yield the immediate precursors to the large and small rRNAs (23S and 16S). Processes some mRNAs, and tRNAs when they are encoded in the rRNA operon. Processes pre-crRNA and tracrRNA of type II CRISPR loci if present in the organism. In Wolbachia pipientis wMel, this protein is Ribonuclease 3.